We begin with the raw amino-acid sequence, 182 residues long: Large ribosomal subunit protein uL5 (182 aa).

This sequence belongs to the universal ribosomal protein uL5 family. As to quaternary structure, part of the 50S ribosomal subunit; part of the 5S rRNA/L5/L18/L25 subcomplex. Contacts the 5S rRNA and the P site tRNA. Forms a bridge to the 30S subunit in the 70S ribosome.

This is one of the proteins that bind and probably mediate the attachment of the 5S RNA into the large ribosomal subunit, where it forms part of the central protuberance. In the 70S ribosome it contacts protein S13 of the 30S subunit (bridge B1b), connecting the 2 subunits; this bridge is implicated in subunit movement. Contacts the P site tRNA; the 5S rRNA and some of its associated proteins might help stabilize positioning of ribosome-bound tRNAs. The polypeptide is Large ribosomal subunit protein uL5 (Thermosipho melanesiensis (strain DSM 12029 / CIP 104789 / BI429)).